Here is a 539-residue protein sequence, read N- to C-terminus: MIO-dependent tyrosine 2,3-aminomutase (539 aa).

Tyrosine 63 functions as the Proton donor/acceptor in the catalytic mechanism. Histidine 93 contributes to the substrate binding site. The 5-imidazolinone (Ala-Gly) cross-link spans 152–154 (ASG). Serine 153 is subject to 2,3-didehydroalanine (Ser). Positions 205 and 311 each coordinate substrate.

Belongs to the TAL/TAM family. In terms of assembly, homotetramer; dimer of dimers. In terms of processing, contains an active site 4-methylidene-imidazol-5-one (MIO), which is formed autocatalytically by cyclization and dehydration of residues Ala-Ser-Gly.

The catalysed reaction is L-tyrosine = 3-amino-3-(4-hydroxyphenyl)propanoate. The enzyme catalyses L-tyrosine = (E)-4-coumarate + NH4(+). Its function is as follows. Involved in the biosynthesis of the enediyne antitumor antibiotic C-1027. Catalyzes the MIO-dependent deamination of L-tyrosine generating the corresponding alpha,beta-unsaturated acid, (S)-beta-tyrosine. The sequence is that of MIO-dependent tyrosine 2,3-aminomutase from Streptomyces globisporus.